The following is a 1986-amino-acid chain: Protein Shroom3 (1986 aa).

A disordered region spans residues 1–21; sequence MKTPENLEEPSATPNPSRTPT. In terms of domain architecture, PDZ spans 24–109; that stretch reads FVYLEALLEG…TLRLVVRRDV (86 aa). 5 disordered regions span residues 152–199, 211–239, 265–285, 342–463, and 564–1055; these read CSEP…SSTS, RSPDQCSSQGSMESLEPSGGYPPCHLLSP, TSSSIFEYPPPGGSARERSGS, QGCA…QPLL, and NEDS…RRIF. The residue at position 212 (Ser-212) is a Phosphoserine. Polar residues-rich tracts occupy residues 357–376 and 415–425; these read PSPSWSQQCSGSLETATDNL and PQTNSSGSQKT. A compositionally biased stretch (basic and acidic residues) spans 430-440; the sequence is DQLHTVPERSP. A phosphoserine mark is found at Ser-439 and Ser-443. Polar residues predominate over residues 595-607; it reads ACSNHHSLSSPQA. Basic and acidic residues predominate over residues 630–645; that stretch reads QEDHNANLRQKVEREG. Positions 653–677 are enriched in polar residues; it reads NSGRTRSAFSSLQNIPESLRRQSNV. A compositionally biased stretch (low complexity) spans 747-761; the sequence is SGASQRRLSSSSSAA. The segment covering 774-785 has biased composition (basic and acidic residues); the sequence is KVSRIEEREQGR. Composition is skewed to low complexity over residues 796-814 and 865-874; these read YGPGYRPGRTGPTPSTSSS and DGRGPPARGG. Ser-888 is subject to Phosphoserine. The span at 895–908 shows a compositional bias: basic and acidic residues; it reads EAEREASWSEDRPG. Thr-909 bears the Phosphothreonine mark. A phosphoserine mark is found at Ser-912 and Ser-969. The ASD1 domain occupies 927-1023; that stretch reads IKDAQSRVLG…SEPEKMNEVG (97 aa). The span at 1004-1020 shows a compositional bias: basic and acidic residues; it reads LTVEQKKRSYSEPEKMN. 2 positions are modified to phosphoserine: Ser-1063 and Ser-1066. Disordered stretches follow at residues 1083–1102, 1107–1223, 1304–1425, and 1446–1654; these read YIQRKTGKRPTGAACTPEAG, AQSA…AEDL, ATVA…PPWV, and ANLK…KTSE. Positions 1114-1127 are enriched in low complexity; it reads AGPAAPDGPGLASA. Over residues 1134 to 1146 the composition is skewed to basic and acidic residues; sequence REPEALPRKEHTH. Phosphoserine is present on residues Trp-1175, Val-1179, and Ser-1219. Low complexity predominate over residues 1307–1318; that stretch reads ASSAPPESSGAA. A phosphoserine mark is found at Ser-1350 and Ser-1354. The span at 1366–1399 shows a compositional bias: polar residues; sequence YRSQLAMDQQTGQQPPSSPASAVTQPTSPRSPEL. Residues 1455–1469 show a composition bias toward low complexity; that stretch reads PSRPSSCSTSDPDTP. The segment covering 1513-1524 has biased composition (pro residues); that stretch reads LPPPPPPSPPSE. Polar residues predominate over residues 1581-1630; the sequence is EGSQIMTATPPQTSAKGSEAESNTPSSASAQPQLNGSPGKQLCPSQTRNL. The span at 1634-1654 shows a compositional bias: basic and acidic residues; that stretch reads PVERTQDLGKKTHAEPQKTSE. The 289-residue stretch at 1659 to 1947 folds into the ASD2 domain; the sequence is EALAKEIVHQ…QVRCLLESLP (289 aa). The stretch at 1844–1890 forms a coiled coil; sequence RLARVENVLRGLGEDASKEERSSLNEKRKVLAGQHEDARELKENLDR.

It belongs to the shroom family. In terms of assembly, interacts with F-actin. Interacts with ROCK1.

Its subcellular location is the cell junction. The protein resides in the adherens junction. The protein localises to the cytoplasm. It is found in the cytoskeleton. It localises to the apical cell membrane. Controls cell shape changes in the neuroepithelium during neural tube closure. Induces apical constriction in epithelial cells by promoting the apical accumulation of F-actin and myosin II, and probably by bundling stress fibers. Induces apicobasal cell elongation by redistributing gamma-tubulin and directing the assembly of robust apicobasal microtubule arrays. The sequence is that of Protein Shroom3 (Shroom3) from Mus musculus (Mouse).